Reading from the N-terminus, the 82-residue chain is uncharacterized protein (82 aa).

Belongs to the chlamydial CPn_0711/CT_665/TC_0036 family.

This is an uncharacterized protein from Chlamydia pneumoniae (Chlamydophila pneumoniae).